The following is a 199-amino-acid chain: Holliday junction branch migration complex subunit RuvA (199 aa).

The segment at 1-64 (MIARLTGMLA…EDAISLFGFR (64 aa)) is domain I. The segment at 65–143 (TVAEKEFFQV…KMDVAPSTKE (79 aa)) is domain II. A flexible linker region spans residues 144 to 154 (AAPSEAPPEVA). A domain III region spans residues 154–199 (ADDVASALVNLGYKEAVVRKVLAEMAIESGASTEAVLRQALKILMK).

The protein belongs to the RuvA family. As to quaternary structure, homotetramer. Forms an RuvA(8)-RuvB(12)-Holliday junction (HJ) complex. HJ DNA is sandwiched between 2 RuvA tetramers; dsDNA enters through RuvA and exits via RuvB. An RuvB hexamer assembles on each DNA strand where it exits the tetramer. Each RuvB hexamer is contacted by two RuvA subunits (via domain III) on 2 adjacent RuvB subunits; this complex drives branch migration. In the full resolvosome a probable DNA-RuvA(4)-RuvB(12)-RuvC(2) complex forms which resolves the HJ.

Its subcellular location is the cytoplasm. Its function is as follows. The RuvA-RuvB-RuvC complex processes Holliday junction (HJ) DNA during genetic recombination and DNA repair, while the RuvA-RuvB complex plays an important role in the rescue of blocked DNA replication forks via replication fork reversal (RFR). RuvA specifically binds to HJ cruciform DNA, conferring on it an open structure. The RuvB hexamer acts as an ATP-dependent pump, pulling dsDNA into and through the RuvAB complex. HJ branch migration allows RuvC to scan DNA until it finds its consensus sequence, where it cleaves and resolves the cruciform DNA. This is Holliday junction branch migration complex subunit RuvA from Geobacter metallireducens (strain ATCC 53774 / DSM 7210 / GS-15).